The sequence spans 178 residues: uncharacterized protein (178 aa).

Helical transmembrane passes span 6 to 26 (AIFGLLSVIFVIMAISQVSGL) and 154 to 174 (KELVITAVLIISILGLGAMLI).

It is found in the cell membrane. This is an uncharacterized protein from Methanocaldococcus jannaschii (strain ATCC 43067 / DSM 2661 / JAL-1 / JCM 10045 / NBRC 100440) (Methanococcus jannaschii).